We begin with the raw amino-acid sequence, 317 residues long: Sperm acrosome membrane-associated protein 6 (317 aa).

The N-terminal stretch at 1–18 (MFVFIAKLLIFSSVITSA) is a signal peptide. Over 19-281 (FTCYQCFIDE…PSFSFWLPRP (263 aa)) the chain is Extracellular. Intrachain disulfides connect Cys-21–Cys-143, Cys-24–Cys-146, Cys-35–Cys-51, Cys-128–Cys-151, and Cys-132–Cys-157. Asn-29 carries an N-linked (GlcNAc...) asparagine glycan. One can recognise an Ig-like domain in the interval 123-237 (PRVSGCLPPC…EVLSQEQSLV (115 aa)). Residue Asn-168 is glycosylated (N-linked (GlcNAc...) asparagine). Residues Cys-174 and Cys-227 are joined by a disulfide bond. A helical membrane pass occupies residues 282-302 (ALLITCLTATMLLIFLSLGAM). Topologically, residues 303-317 (CRLWYQIRTNVSNPA) are cytoplasmic.

Belongs to the SPACA6 family. In terms of assembly, forms a complex with izumo1 and tmem81 on spermatocyte cell membrane. The complex binds to oocyte protein bncr. As to expression, expressed in testis.

Its subcellular location is the cytoplasmic vesicle. It is found in the secretory vesicle. The protein resides in the acrosome membrane. Sperm protein required for fusion of sperm with the egg membrane during fertilization. May regulate the expression of sperm surface protein DCST2. In Danio rerio (Zebrafish), this protein is Sperm acrosome membrane-associated protein 6.